The following is an 85-amino-acid chain: Large ribosomal subunit protein bL27 (85 aa).

The interval 1–21 (MAHKKGQGSTQNNRDSAGRRL) is disordered.

The protein belongs to the bacterial ribosomal protein bL27 family.

This chain is Large ribosomal subunit protein bL27, found in Nitratiruptor sp. (strain SB155-2).